Here is a 192-residue protein sequence, read N- to C-terminus: MRPTDTSNFAPAEISKRKVRRVKANGRERARMHGLNNALDMLREYIPITTQHQKLSKIETLRLARNYIDALQRMLQTNEQPTPLEYAHTLANGLSQTTTNMLANLLQVQPRQLLPPSQFDIFSDPSHHQLHPSHPPPHSSFSSSSPSSSCSPPQYYYSPTQPSAAPLQGSCDPQYQQMYHQHSHQNTFNYSP.

Residues V19–L71 enclose the bHLH domain. Positions P116 to P192 are disordered. The segment covering S139 to S163 has biased composition (low complexity).

Expressed in neuroblasts of the AB lineage. More specifically in precursors of the embryonic ventral cord motor neurons. Expressed to a lesser degree in the EMS lineage which generates mostly endoderm and mesoderm tissues.

Its subcellular location is the nucleus. In terms of biological role, acts as a transcriptional regulator whose activity is required for several aspects of motor neuron fate specification, including cell division patterns, proper spatiotemporal expression of fate-specific markers, and normal axonal morphology and pathfinding. Involved in regulating glial specification. This chain is Neurogenic differentiation factor 1 (cnd-1), found in Caenorhabditis elegans.